Consider the following 298-residue polypeptide: 4-hydroxybenzoate octaprenyltransferase (298 aa).

The next 7 helical transmembrane spans lie at 30 to 50, 54 to 74, 105 to 125, 148 to 168, 218 to 238, 240 to 260, and 275 to 295; these read IGTW…AEGI, GTLL…CVVN, VLFA…NLPT, FPQV…FMAI, DRLM…WVGL, LALG…FVFQ, and AFLN…LSLW.

This sequence belongs to the UbiA prenyltransferase family. Mg(2+) serves as cofactor.

The protein resides in the cell inner membrane. It catalyses the reaction all-trans-octaprenyl diphosphate + 4-hydroxybenzoate = 4-hydroxy-3-(all-trans-octaprenyl)benzoate + diphosphate. It functions in the pathway cofactor biosynthesis; ubiquinone biosynthesis. Functionally, catalyzes the prenylation of para-hydroxybenzoate (PHB) with an all-trans polyprenyl group. Mediates the second step in the final reaction sequence of ubiquinone-8 (UQ-8) biosynthesis, which is the condensation of the polyisoprenoid side chain with PHB, generating the first membrane-bound Q intermediate 3-octaprenyl-4-hydroxybenzoate. The chain is 4-hydroxybenzoate octaprenyltransferase from Chromohalobacter salexigens (strain ATCC BAA-138 / DSM 3043 / CIP 106854 / NCIMB 13768 / 1H11).